The following is a 283-amino-acid chain: Circadian clock oscillator protein KaiA (283 aa).

Residues 1–146 (MAQSTALTIC…LFRLPALKES (146 aa)) form a psR domain, not required to form KaiA:KaiB:KaiC complex, or for a full KaiC phosphorylation cycle region. Positions 3–163 (QSTALTICGL…RLSQKLKERL (161 aa)) constitute a KaiA N-terminal domain. Residues 164 to 172 (GYLGVYYKR) form a flexible linker region. Positions 173–281 (DTAFFFRRMS…CEMYRRSIPR (109 aa)) constitute a KaiA C-terminal domain.

It belongs to the KaiA family. In terms of assembly, homodimer. The KaiABC complex composition changes during the circadian cycle to control KaiC phosphorylation. Complexes KaiC(6), KaiA(2-4):KaiC(6), KaiB(6):KaiC(6) and KaiC(6):KaiB(6):KaiA(12) are among the most important forms, many form cooperatively. Binds to KaiB and KaiC, the N-terminus (pseudoreceiver domain PsR) is not required for either interaction. 1 KaiB binds to one subunit of the KaiA homodimer. KaiA and CikA bind to the same region of the KaiB(fs) form and therefore compete.

Functionally, key component of the KaiABC oscillator complex, which constitutes the main circadian regulator in cyanobacteria. Complex composition changes during the circadian cycle to control KaiC phosphorylation. KaiA stimulates KaiC autophosphorylation, while KaiB sequesters KaiA, leading to KaiC autodephosphorylation. KaiA binding to the KaiC CII domain during the subjective day yields KaiA(2-4):KaiC(6) complexes which stimulate KaiC autophosphorylation. Phospho-Ser-431 KaiC accumulation triggers binding of KaiB during the subjective night to form the KaiB(6):KaiC(6) complex, leading to changes in the output regulators CikA and SasA. KaiB(6):KaiC(6) formation exposes a site for KaiA binding on KaiB that sequesters KaiA from KaiC's CII domain, making the KaiC(6):KaiB(6):KaiA(12) complex resulting in KaiC autodephosphorylation. Complete dephosphorylation of KaiC leads to dissociation of KaiA(2):KaiB(1), completing 1 cycle of the Kai oscillator. Formation of the KaiB:KaiC complex is promoted by KaiA, helping switch KaiC from its autophosphorylation to autodephosphatase function. Binds oxidized quinones via the N-terminal PsR domain, allowing it to sense redox changes and possibly mediate clock input. The polypeptide is Circadian clock oscillator protein KaiA (Thermosynechococcus vestitus (strain NIES-2133 / IAM M-273 / BP-1)).